A 137-amino-acid chain; its full sequence is Ribosome-binding factor A (137 aa).

It belongs to the RbfA family. Monomer. Binds 30S ribosomal subunits, but not 50S ribosomal subunits or 70S ribosomes.

It is found in the cytoplasm. Its function is as follows. One of several proteins that assist in the late maturation steps of the functional core of the 30S ribosomal subunit. Associates with free 30S ribosomal subunits (but not with 30S subunits that are part of 70S ribosomes or polysomes). Required for efficient processing of 16S rRNA. May interact with the 5'-terminal helix region of 16S rRNA. In Rhodopseudomonas palustris (strain BisB18), this protein is Ribosome-binding factor A.